The chain runs to 687 residues: Carboxysome assembly protein CcmM (687 aa).

Residues 242 to 327 (SINSDITNQI…RVVEVIIQRP (86 aa)) form a rbcS-like repeat 1, SSUL1 region. Disordered stretches follow at residues 328–355 (GDVPGSPSRGTTTTKALSSGGSGRSAVA) and 442–476 (VHRPNGNGNGKPSSSSSSVGYKSAPVSSAGGSSAG). Polar residues predominate over residues 335-346 (SRGTTTTKALSS). Residues 366-445 (ANQLRALLHQ…RVAEIVVHRP (80 aa)) form a rbcS-like repeat 2, SSUL2 region. A compositionally biased stretch (low complexity) spans 451–472 (GKPSSSSSSVGYKSAPVSSAGG). Residues 480–562 (PEVIATVRGL…RVLEQIIQRP (83 aa)) form a rbcS-like repeat 3, SSUL3 region. The interval 565 to 590 (NVVAGRSPSSSSASTSSSASSNGFGS) is disordered. The span at 568 to 587 (AGRSPSSSSASTSSSASSNG) shows a compositional bias: low complexity. The rbcS-like repeat 4, SSUL4 stretch occupies residues 599–687 (SAVRLDNSVV…RVLETIIQRP (89 aa)).

It belongs to the gamma-class carbonic anhydrase family. Probably forms homotrimers. Full length CcmM interacts with CcaA, CcmK1, CcmK2, CcmK4, CcmL, CcmN and itself, while the N-terminus of CcmM (first 249 residues) only interacts with CcaA, CcmM and CcmN. A probable CcmM-CcaA-CcmN complex as well as a CcaA-RuBisCO-CcmM complex can also be isolated. Interacts with full-length CcaA and the first 220 residues of CcaA; surface residues Gln-177 to Gln-188 are responsible in part for binding. Multiple forms of the protein of 73 (full length), 62, 52 (the most predominant form) and 36 kDa are seen even in the presence of protease inhibitors. CcmM52 interacts with CcaA.

Its subcellular location is the carboxysome. Its function is as follows. Functions as a scaffold protein for the assembly of beta-carboxysomes, initiates carboxysome assembly via its N-terminal domain binding to CcaA, CcmK and CcmL. Binds HCO(3)-, suggesting it may play a role in the activity or regulation of bicarbonate dehydration. Also initiates carboxysome assembly by coalescing RuBisCO (ribulose bisphosphate carboxylase, rbcL-rbcS) via its SSU-like domains. Produced as a full-length and a shorter form; both forms are required for correct carboxysome assembly and growth. Despite its strong similarity to gamma-class carbonic anhydrase (CA) it does not have detectable CA activity. Beta-carboxysome assembly initiates when soluble RuBisCO is condensed into a liquid matrix in a pre-carboxysome by the RbcS-like domains of probably both forms of CcmM. CcmN interacts with the N-terminus of full length CcmM, and then recruits the shell proteins (CcmK) via CcmN's encapsulation peptide. CcmM73 also interacts with CcmK proteins and CcmL directly. Shell formation requires CcmK proteins and CcmO. CcmL caps the otherwise elongated carboxysome. Once fully encapsulated carboxysomes are formed, they migrate within the cell probably via interactions with the cytoskeleton. The polypeptide is Carboxysome assembly protein CcmM (Synechocystis sp. (strain ATCC 27184 / PCC 6803 / Kazusa)).